A 348-amino-acid chain; its full sequence is CCAAT/enhancer-binding protein beta (348 aa).

Residues 1–24 form a required for Lys-174 sumoylation region; sequence MQRLVVWDPVCLPLPPPPPAFKSM. R3 bears the Asymmetric dimethylarginine; by CARM1 mark. The interval 24–135 is required for MYC transcriptional repression; sequence MEVANFYYEA…YGGKNCKKAA (112 aa). The residue at position 43 (K43) is an N6-acetyllysine; alternate. K43 is subject to N6-methylated lysine; alternate. Disordered regions lie at residues 44-65 and 79-112; these read AAPA…ELGS and LEPL…ASSG. The span at 47–59 shows a compositional bias: pro residues; that stretch reads AAPPADRPGPRPP. Residues 116-124 carry the 9aaTAD motif; that stretch reads DFLSDLFSD. N6-acetyllysine; by KAT2A and KAT2B occurs at positions 129 and 132. K133 carries the N6-acetyllysine; by KAT2A and KAT2B; alternate modification. A Glycyl lysine isopeptide (Lys-Gly) (interchain with G-Cter in SUMO2); alternate cross-link involves residue K133. The interval 158-178 is disordered; sequence APLHPPPPPPPPPAELKAEPG. Residues 160–171 are compositionally biased toward pro residues; sequence LHPPPPPPPPPA. Residue K174 forms a Glycyl lysine isopeptide (Lys-Gly) (interchain with G-Cter in SUMO2); alternate linkage. Residue K174 forms a Glycyl lysine isopeptide (Lys-Gly) (interchain with G-Cter in SUMO); alternate linkage. Residues K185 and K187 each participate in a glycyl lysine isopeptide (Lys-Gly) (interchain with G-Cter in SUMO2) cross-link. Over residues 219-259 the composition is skewed to low complexity; it reads SGSSGSLSTSSSSSPPGTPSPADAKATPAAAACYAGAAPAP. The disordered stretch occupies residues 219–277; that stretch reads SGSSGSLSTSSSSSPPGTPSPADAKATPAAAACYAGAAPAPSQVKSKAKKTVDKHSDEY. Phosphothreonine; by GSK3-beta is present on T227. Residues S228 and S229 are each glycosylated (O-linked (GlcNAc) serine). Phosphoserine; by GSK3-beta is present on S232. Residue T236 is modified to Phosphothreonine; by RPS6KA1, CDK2 and MAPK. Glycyl lysine isopeptide (Lys-Gly) (interchain with G-Cter in SUMO2) cross-links involve residues K263 and K265. Residues 268 to 277 show a composition bias toward basic and acidic residues; the sequence is KTVDKHSDEY. Residue T269 is modified to Phosphothreonine; by RPS6KA1 and PKC/PRKCA. In terms of domain architecture, bZIP spans 274-337; it reads SDEYKIRRER…STLRNLFKTL (64 aa). The basic motif stretch occupies residues 278-298; that stretch reads KIRRERNNIAVRKSRDKAKMR. The residue at position 291 (S291) is a Phosphoserine; by PKC/PRKCA. The leucine-zipper stretch occupies residues 300–307; the sequence is LETQHKVL. Residue S328 is modified to Phosphoserine; by CaMK2. Residue K335 forms a Glycyl lysine isopeptide (Lys-Gly) (interchain with G-Cter in SUMO2) linkage.

It belongs to the bZIP family. C/EBP subfamily. As to quaternary structure, binds DNA as a homodimer and as a heterodimer. Interacts with ATF4. Binds DNA as a heterodimer with ATF4. Interacts with MYB; within the complex, MYB and CEBPB bind to different promoter regions. Can form stable heterodimers with CEBPA, CEBPD and CEBPG. Interacts with SIX1. Interacts with TRIM28 and PTGES2. Interacts with PRDM16. Interacts with CCDC85B. Forms a complex with THOC5. Interacts with ZNF638; this interaction increases transcriptional activation. Interacts with CIDEA and CIDEC; these interactions increase transcriptional activation of a subset of CEBPB downstream target genes. Interacts with DDIT3/CHOP. Interacts with EP300; recruits EP300 to chromatin. Interacts with RORA; the interaction disrupts interaction with EP300. Interacts (not methylated) with MED23, MED26, SMARCA2, SMARCB1 and SMARCC1. Interacts with KAT2A and KAT2B. Interacts with ATF5; EP300 is required for ATF5 and CEBPB interaction and DNA binding. Interacts with NFE2L1; the heterodimer represses expression of DSPP during odontoblast differentiation. In terms of processing, methylated. Methylation at Arg-3 by CARM1 and at Lys-43 by EHMT2 inhibit transactivation activity. Methylation is probably inhibited by phosphorylation at Thr-236. Sumoylated by polymeric chains of SUMO2 or SUMO3. Sumoylation at Lys-174 is required for inhibition of T-cells proliferation. In adipocytes, sumoylation at Lys-174 by PIAS1 leads to ubiquitination and subsequent proteasomal degradation. Desumoylated by SENP2, which abolishes ubiquitination and stabilizes protein levels. Post-translationally, ubiquitinated, leading to proteasomal degradation. In terms of processing, phosphorylated at Thr-236 by MAPK and CDK2, serves to prime phosphorylation at Thr-227 and Ser-232 by GSK3B and acquire DNA-binding as well as transactivation activities, required to induce adipogenesis. MAPK and CDK2 act sequentially to maintain Thr-236 in the primed phosphorylated state during mitotical cloning expansion and thereby progression of terminal differentiation. Phosphorylation at Thr-269 enhances transactivation activity. Phosphorylation at Ser-328 in response to calcium increases transactivation activity. Phosphorylated at Thr-236 by RPS6KA1. O-glycosylated, glycosylation at Ser-228 and Ser-229 prevents phosphorylation on Thr-236, Ser-232 and Thr-227 and DNA binding activity which delays the adipocyte differentiation program. Post-translationally, acetylated. Acetylation at Lys-43 is an important and dynamic regulatory event that contributes to its ability to transactivate target genes, including those associated with adipogenesis and adipocyte function. Deacetylation by HDAC1 represses its transactivation activity. Acetylated by KAT2A and KAT2B within a cluster of lysine residues between amino acids 129-133, this acetylation is strongly induced by glucocorticoid treatment and enhances transactivation activity.

Its subcellular location is the nucleus. It is found in the cytoplasm. Functionally, important transcription factor regulating the expression of genes involved in immune and inflammatory responses. Also plays a significant role in adipogenesis, as well as in the gluconeogenic pathway, liver regeneration, and hematopoiesis. The consensus recognition site is 5'-T[TG]NNGNAA[TG]-3'. Its functional capacity is governed by protein interactions and post-translational protein modifications. During early embryogenesis, plays essential and redundant roles with CEBPA. Has a promitotic effect on many cell types such as hepatocytes and adipocytes but has an antiproliferative effect on T-cells by repressing MYC expression, facilitating differentiation along the T-helper 2 lineage. Binds to regulatory regions of several acute-phase and cytokines genes and plays a role in the regulation of acute-phase reaction and inflammation. Also plays a role in intracellular bacteria killing. During adipogenesis, is rapidly expressed and, after activation by phosphorylation, induces CEBPA and PPARG, which turn on the series of adipocyte genes that give rise to the adipocyte phenotype. The delayed transactivation of the CEBPA and PPARG genes by CEBPB appears necessary to allow mitotic clonal expansion and thereby progression of terminal differentiation. Essential for female reproduction because of a critical role in ovarian follicle development. Restricts osteoclastogenesis: together with NFE2L1; represses expression of DSPP during odontoblast differentiation. This Bos taurus (Bovine) protein is CCAAT/enhancer-binding protein beta (CEBPB).